We begin with the raw amino-acid sequence, 235 residues long: Phosphoribosylaminoimidazole-succinocarboxamide synthase (235 aa).

Belongs to the SAICAR synthetase family.

The enzyme catalyses 5-amino-1-(5-phospho-D-ribosyl)imidazole-4-carboxylate + L-aspartate + ATP = (2S)-2-[5-amino-1-(5-phospho-beta-D-ribosyl)imidazole-4-carboxamido]succinate + ADP + phosphate + 2 H(+). It functions in the pathway purine metabolism; IMP biosynthesis via de novo pathway; 5-amino-1-(5-phospho-D-ribosyl)imidazole-4-carboxamide from 5-amino-1-(5-phospho-D-ribosyl)imidazole-4-carboxylate: step 1/2. In Clostridium acetobutylicum (strain ATCC 824 / DSM 792 / JCM 1419 / IAM 19013 / LMG 5710 / NBRC 13948 / NRRL B-527 / VKM B-1787 / 2291 / W), this protein is Phosphoribosylaminoimidazole-succinocarboxamide synthase.